The sequence spans 1374 residues: F-actin-uncapping protein LRRC16A (1374 aa).

Methionine 1 is subject to N-acetylmethionine. Residue serine 122 is modified to Phosphoserine. LRR repeat units follow at residues 245–269, 275–298, 304–327, 336–363, 391–418, 423–447, 485–510, 547–570, 574–597, and 658–682; these read SNRL…LAGA, NSGL…SLSI, PKGL…SLCQ, ASTL…FLAQ, LQCL…SFKQ, SLAL…LLLG, IHNI…VWLS, DSPL…IINA, NTSL…MLAK, and LQKI…AYRL. Positions 714 to 738 form a coiled coil; sequence GDAIQEDLKAAERLMRDAKNSKTLL. Threonine 920 is subject to Phosphothreonine. 2 disordered regions span residues 961 to 982 and 1040 to 1374; these read PFPS…PSEE and KMDC…FIFV. One copy of the LRR 11 repeat lies at 962 to 985; the sequence is FPSVRQEKRSSGLISELPSEEGRR. The inhibits capping activity of CP stretch occupies residues 962 to 1084; sequence FPSVRQEKRS…LIKSRSRSER (123 aa). Position 972 is a phosphoserine (serine 972). Over residues 1040–1064 the composition is skewed to basic and acidic residues; it reads KMDCKRSSSRSSDAHELGEGDEKKK. The tract at residues 1058–1092 is necessary for localization at the cell membrane; it reads EGDEKKKRDSRRSGFLNLIKSRSRSERPPTVLMTE. Phosphoserine is present on serine 1096. Composition is skewed to basic and acidic residues over residues 1108-1132 and 1141-1150; these read TTRK…KTPE and EAGRAERSDS. Over residues 1191–1204 the composition is skewed to polar residues; the sequence is VISQDPSSPVSCNT. A Phosphothreonine modification is found at threonine 1229. The segment covering 1232 to 1244 has biased composition (basic and acidic residues); it reads KNAKAEPRVDGGC. A compositionally biased stretch (low complexity) spans 1245–1263; it reads RSRSSSSMPTSPKPLLQSP. A phosphoserine mark is found at serine 1281, serine 1289, serine 1291, serine 1295, serine 1319, serine 1328, and serine 1335. Over residues 1317-1330 the composition is skewed to low complexity; the sequence is QNSSQSSPRSFSQE. Residues 1343–1356 show a composition bias toward basic and acidic residues; that stretch reads QEQKQRSSGKDGHQ. Serine 1363 is subject to Phosphoserine.

The protein belongs to the CARMIL family. As to quaternary structure, homodimer. Interacts (via C-terminus) with heterodimeric capping protein (CP); this interaction uncaps barbed ends capped by CP, enhances barbed-end actin polymerization and promotes lamellipodial formation and cell migration. Interacts with MYO1E. Interacts with TRIO.

Its subcellular location is the cytoplasm. The protein resides in the cytoskeleton. It localises to the cell membrane. It is found in the cell projection. The protein localises to the lamellipodium. Cell membrane-cytoskeleton-associated protein that plays a role in the regulation of actin polymerization at the barbed end of actin filaments. Prevents F-actin heterodimeric capping protein (CP) activity at the leading edges of migrating cells, and hence generates uncapped barbed ends and enhances actin polymerization, however, seems unable to nucleate filaments. Plays a role in lamellipodial protrusion formations and cell migration. The sequence is that of F-actin-uncapping protein LRRC16A from Mus musculus (Mouse).